Consider the following 809-residue polypeptide: Chloride channel protein F (809 aa).

The Cytoplasmic portion of the chain corresponds to 1-65; that stretch reads MSTSKYSKMI…SWAKFARLNN (65 aa). The next 11 membrane-spanning stretches (helical) occupy residues 66–86, 110–130, 152–172, 218–238, 246–266, 295–315, 333–353, 395–415, 425–445, 459–479, and 486–506; these read FYIW…LVAV, LQYL…CFII, FWNP…GLLL, AACC…GVLF, FYLI…AVGI, LIAF…FISL, ITPF…SFPL, GIIL…AVSI, IPLF…MLVL, VVGA…AMII, and LTYM…GNLL. The 59-residue stretch at 539–597 folds into the CBS 1 domain; it reads MKRDLYYVCQNTTLSQISNLLKRVDEHSIPVVSSDNDLQLIGTISTTTLEEVIAYHERL. Disordered regions lie at residues 604-646 and 692-729; these read PLSL…NNQN and NNNF…NNNS. The span at 620–646 shows a compositional bias: low complexity; that stretch reads NDNINNNQNNNNNNNNNNNNNNSNNQN. Positions 756–809 constitute a CBS 2 domain; that stretch reads IDSSPFQIQETMPVRKIVFMFMMLGGNILYVTNKGKLTGVVAKTELVHQNNNKH.

This sequence belongs to the chloride channel (TC 2.A.49) family.

It localises to the membrane. In terms of biological role, voltage-gated chloride channel. Chloride channels may have several functions including the regulation of cell volume, membrane potential stabilization and signal transduction. This Dictyostelium discoideum (Social amoeba) protein is Chloride channel protein F (clcF).